The chain runs to 678 residues: Protein CASP (678 aa).

Residues 1-619 (MAANVGSMSQ…LILSNKTART (619 aa)) lie on the Cytoplasmic side of the membrane. 4 coiled-coil regions span residues 16–40 (DLQQ…ESEQ), 67–374 (LLKS…TLKS), 427–454 (HLTE…TIQS), and 502–556 (LSII…FLQS). Phosphoserine is present on Ser-586. The chain crosses the membrane as a helical; Anchor for type IV membrane protein span at residues 620 to 640 (IGFFYTLFLHCLVFLVLYKLA). Topologically, residues 641–678 (WSESVERDCAATCAKKFADHLHKFHESDNGAAAGDLWQ) are lumenal.

This sequence belongs to the CASP family. In terms of assembly, homodimer; disulfide-linked. Interacts with GOLGA5. In terms of tissue distribution, ubiquitously expressed.

It is found in the golgi apparatus membrane. Functionally, may be involved in intra-Golgi retrograde transport. This is Protein CASP (Cux1) from Mus musculus (Mouse).